The primary structure comprises 148 residues: SsrA-binding protein (148 aa).

Belongs to the SmpB family.

It localises to the cytoplasm. Required for rescue of stalled ribosomes mediated by trans-translation. Binds to transfer-messenger RNA (tmRNA), required for stable association of tmRNA with ribosomes. tmRNA and SmpB together mimic tRNA shape, replacing the anticodon stem-loop with SmpB. tmRNA is encoded by the ssrA gene; the 2 termini fold to resemble tRNA(Ala) and it encodes a 'tag peptide', a short internal open reading frame. During trans-translation Ala-aminoacylated tmRNA acts like a tRNA, entering the A-site of stalled ribosomes, displacing the stalled mRNA. The ribosome then switches to translate the ORF on the tmRNA; the nascent peptide is terminated with the 'tag peptide' encoded by the tmRNA and targeted for degradation. The ribosome is freed to recommence translation, which seems to be the essential function of trans-translation. In Ehrlichia canis (strain Jake), this protein is SsrA-binding protein.